A 318-amino-acid polypeptide reads, in one-letter code: NADH-ubiquinone oxidoreductase chain 1 (318 aa).

The next 8 helical transmembrane spans lie at M3 to I23, M70 to P90, L100 to G120, L146 to I166, H171 to A191, L222 to F242, E253 to I273, and L294 to I314.

The protein belongs to the complex I subunit 1 family.

It is found in the mitochondrion inner membrane. The enzyme catalyses a ubiquinone + NADH + 5 H(+)(in) = a ubiquinol + NAD(+) + 4 H(+)(out). Core subunit of the mitochondrial membrane respiratory chain NADH dehydrogenase (Complex I) that is believed to belong to the minimal assembly required for catalysis. Complex I functions in the transfer of electrons from NADH to the respiratory chain. The immediate electron acceptor for the enzyme is believed to be ubiquinone. The chain is NADH-ubiquinone oxidoreductase chain 1 (MT-ND1) from Pteropus vampyrus (Large flying fox).